The chain runs to 845 residues: Protein P (845 aa).

The terminal protein domain (TP) stretch occupies residues Met1–Gln179. The interval Glu180–Leu348 is spacer. 2 disordered regions span residues Thr188–Ser211 and Tyr288–Gln317. Polar residues-rich tracts occupy residues Val199–Ser211 and His290–Gly301. Residues Glu349–Gln692 are polymerase/reverse transcriptase domain (RT). The region spanning Glu359–Ile602 is the Reverse transcriptase domain. Residues Asp431, Asp553, and Asp554 each coordinate Mg(2+).

This sequence belongs to the hepadnaviridae P protein family.

It catalyses the reaction DNA(n) + a 2'-deoxyribonucleoside 5'-triphosphate = DNA(n+1) + diphosphate. The enzyme catalyses Endonucleolytic cleavage to 5'-phosphomonoester.. Its activity is regulated as follows. Activated by host HSP70 and HSP40 in vitro to be able to bind the epsilon loop of the pgRNA. Because deletion of the RNase H region renders the protein partly chaperone-independent, the chaperones may be needed indirectly to relieve occlusion of the RNA-binding site by this domain. Inhibited by several reverse-transcriptase inhibitors: Lamivudine, Adefovir and Entecavir. In terms of biological role, multifunctional enzyme that converts the viral RNA genome into dsDNA in viral cytoplasmic capsids. This enzyme displays a DNA polymerase activity that can copy either DNA or RNA templates, and a ribonuclease H (RNase H) activity that cleaves the RNA strand of RNA-DNA heteroduplexes in a partially processive 3'- to 5'-endonucleasic mode. Neo-synthesized pregenomic RNA (pgRNA) are encapsidated together with the P protein, and reverse-transcribed inside the nucleocapsid. Initiation of reverse-transcription occurs first by binding the epsilon loop on the pgRNA genome, and is initiated by protein priming, thereby the 5'-end of (-)DNA is covalently linked to P protein. Partial (+)DNA is synthesized from the (-)DNA template and generates the relaxed circular DNA (RC-DNA) genome. After budding and infection, the RC-DNA migrates in the nucleus, and is converted into a plasmid-like covalently closed circular DNA (cccDNA). The activity of P protein does not seem to be necessary for cccDNA generation, and is presumably released from (+)DNA by host nuclear DNA repair machinery. This chain is Protein P, found in Homo sapiens (Human).